A 490-amino-acid polypeptide reads, in one-letter code: Cytochrome P450 71B28 (490 aa).

Residues 1 to 21 (MSVFLCFLCLLPLILIFLKNL) traverse the membrane as a helical segment. C440 serves as a coordination point for heme.

This sequence belongs to the cytochrome P450 family. Requires heme as cofactor.

The protein resides in the membrane. This chain is Cytochrome P450 71B28 (CYP71B28), found in Arabidopsis thaliana (Mouse-ear cress).